A 269-amino-acid chain; its full sequence is MKPLKILISNDDGVFAEGIRTLAGAAAFRGHQVTVVCPDQERSATGHGLTLHSPIRAEKANELFGKGVSAWGCNGTPADCVKLALNEILPEKPDLILSGINHGPNLGTDIFCSGTVAAALEGTLAGIPAIAISIASFQWRDFSFASQLALEIAEEALTKNWPQKLLLNINTPPCKSSEMGQLGWTRLSIRQYEEQFTRRIDPRGNPYYWMAGNAVKDIDSAGDGPSQWPSDVAQIESNSPSITPIEPDLFWRGNISDLPAINLKNYFSR.

4 residues coordinate a divalent metal cation: D11, D12, S43, and N101.

It belongs to the SurE nucleotidase family. Requires a divalent metal cation as cofactor.

The protein localises to the cytoplasm. The enzyme catalyses a ribonucleoside 5'-phosphate + H2O = a ribonucleoside + phosphate. Functionally, nucleotidase that shows phosphatase activity on nucleoside 5'-monophosphates. The polypeptide is 5'-nucleotidase SurE (Prochlorococcus marinus (strain MIT 9211)).